A 676-amino-acid polypeptide reads, in one-letter code: Protein timeless (676 aa).

Residues 77–108 (VNTLQKLLNLWFEASLSESSEDNESNTSPPKK) are necessary for normal circadian rhythm. Disordered stretches follow at residues 94–145 (ESSE…CDER) and 346–398 (PESI…LVKR). 2 stretches are compositionally biased toward low complexity: residues 101 to 129 (SNTS…SDNG) and 360 to 369 (QGKPQHQKPP). The short motif at 388-398 (KELRRKKLVKR) is the Nuclear localization signal element.

It belongs to the timeless family. In terms of assembly, forms a heterodimer with period (PER); the complex then translocates into the nucleus. In terms of processing, phosphorylated with a circadian rhythmicity.

Its subcellular location is the nucleus. It is found in the cytoplasm. The protein localises to the perinuclear region. Functionally, required for the production of circadian rhythms. The biological cycle depends on the rhythmic formation and nuclear localization of the TIM-PER complex. Light induces the degradation of TIM, which promotes elimination of PER. Nuclear activity of the heterodimer coordinatively regulates PER and TIM transcription through a negative feedback loop. Behaves as a negative element in circadian transcriptional loop. Does not appear to bind DNA, suggesting indirect transcriptional inhibition. In Drosophila hydei (Fruit fly), this protein is Protein timeless (tim).